Consider the following 143-residue polypeptide: Large ribosomal subunit protein uL15 (143 aa).

Residues 1–13 (MIRKKKKVKKIRG) show a composition bias toward basic residues. The interval 1–39 (MIRKKKKVKKIRGSRTCGGGSHKKRRGAGNKGGRGMAGG) is disordered. Positions 29–38 (GNKGGRGMAG) are enriched in gly residues.

The protein belongs to the universal ribosomal protein uL15 family. As to quaternary structure, part of the 50S ribosomal subunit.

In terms of biological role, binds to the 23S rRNA. This chain is Large ribosomal subunit protein uL15, found in Methanocaldococcus jannaschii (strain ATCC 43067 / DSM 2661 / JAL-1 / JCM 10045 / NBRC 100440) (Methanococcus jannaschii).